The sequence spans 665 residues: Long chain acyl-CoA synthetase 3 (665 aa).

228–239 (IMYTSGTTGDPK) contacts ATP. Residues 495-519 (DGWLHTGDVGEWQPDGAMKIIDRKK) are fatty acid-binding.

The protein belongs to the ATP-dependent AMP-binding enzyme family. The cofactor is Mg(2+).

It catalyses the reaction a long-chain fatty acid + ATP + CoA = a long-chain fatty acyl-CoA + AMP + diphosphate. It participates in lipid metabolism; fatty acid metabolism. In terms of biological role, activation of long-chain fatty acids for both synthesis of cellular lipids, and degradation via beta-oxidation. Preferentially uses palmitate, palmitoleate, oleate and linoleate. In Arabidopsis thaliana (Mouse-ear cress), this protein is Long chain acyl-CoA synthetase 3 (LACS3).